Here is a 450-residue protein sequence, read N- to C-terminus: Glucose-6-phosphate isomerase (450 aa).

Glu-290 serves as the catalytic Proton donor. Residues His-311 and Lys-425 contribute to the active site.

Belongs to the GPI family.

The protein resides in the cytoplasm. It carries out the reaction alpha-D-glucose 6-phosphate = beta-D-fructose 6-phosphate. Its pathway is carbohydrate biosynthesis; gluconeogenesis. It functions in the pathway carbohydrate degradation; glycolysis; D-glyceraldehyde 3-phosphate and glycerone phosphate from D-glucose: step 2/4. Catalyzes the reversible isomerization of glucose-6-phosphate to fructose-6-phosphate. The chain is Glucose-6-phosphate isomerase from Listeria innocua serovar 6a (strain ATCC BAA-680 / CLIP 11262).